We begin with the raw amino-acid sequence, 101 residues long: NADH-quinone oxidoreductase subunit K (101 aa).

Transmembrane regions (helical) follow at residues 4–24 (LAHFLVLGAILFAISIVGIFL), 30–50 (IVLLMAIELMLLAVNINFVAF), and 61–81 (VFVFFILTVAAAESAIGLAIL).

It belongs to the complex I subunit 4L family. As to quaternary structure, NDH-1 is composed of 14 different subunits. Subunits NuoA, H, J, K, L, M, N constitute the membrane sector of the complex.

It is found in the cell inner membrane. The catalysed reaction is a quinone + NADH + 5 H(+)(in) = a quinol + NAD(+) + 4 H(+)(out). NDH-1 shuttles electrons from NADH, via FMN and iron-sulfur (Fe-S) centers, to quinones in the respiratory chain. The immediate electron acceptor for the enzyme in this species is believed to be ubiquinone. Couples the redox reaction to proton translocation (for every two electrons transferred, four hydrogen ions are translocated across the cytoplasmic membrane), and thus conserves the redox energy in a proton gradient. The chain is NADH-quinone oxidoreductase subunit K from Cupriavidus taiwanensis (strain DSM 17343 / BCRC 17206 / CCUG 44338 / CIP 107171 / LMG 19424 / R1) (Ralstonia taiwanensis (strain LMG 19424)).